Reading from the N-terminus, the 669-residue chain is Beta-galactosidase (669 aa).

The signal sequence occupies residues 1 to 24 (MDFPGAARLLSLLLVPLLLGPARG). Residues 25–29 (LRNAS) constitute a propeptide that is removed on maturation. A glycan (N-linked (GlcNAc...) asparagine) is linked at N27. Substrate is bound by residues Y84, E130, and N188. Catalysis depends on E189, which acts as the Proton donor. Cysteines 196 and 231 form a disulfide. N248 carries an N-linked (GlcNAc...) asparagine glycan. E269 (nucleophile) is an active-site residue. Y334 is a binding site for substrate. 4 N-linked (GlcNAc...) asparagine glycosylation sites follow: N465, N499, N547, and N557. Cysteines 628 and 636 form a disulfide. The disordered stretch occupies residues 649–669 (TPTSSHPLPDLSDRDSGWDRV). The segment covering 659-669 (LSDRDSGWDRV) has biased composition (basic and acidic residues).

The protein belongs to the glycosyl hydrolase 35 family. In terms of assembly, homodimer. May form higher multimers.

The protein localises to the lysosome. The enzyme catalyses Hydrolysis of terminal non-reducing beta-D-galactose residues in beta-D-galactosides.. Its function is as follows. Cleaves beta-linked terminal galactosyl residues from gangliosides, glycoproteins, and glycosaminoglycans. This is Beta-galactosidase (GLB1) from Felis catus (Cat).